The chain runs to 226 residues: Isoprenyl transferase (226 aa).

Asp-12 is a catalytic residue. Asp-12 contributes to the Mg(2+) binding site. Substrate is bound by residues 13-16, Trp-17, Lys-25, His-29, and 57-59; these read GNAR and SSE. The active-site Proton acceptor is Asn-60. Substrate-binding positions include Trp-61, Arg-63, Arg-174, and 180 to 182; that span reads RIS. Residue Glu-193 participates in Mg(2+) binding.

It belongs to the UPP synthase family. As to quaternary structure, homodimer. Requires Mg(2+) as cofactor.

Functionally, catalyzes the condensation of isopentenyl diphosphate (IPP) with allylic pyrophosphates generating different type of terpenoids. In Rickettsia bellii (strain RML369-C), this protein is Isoprenyl transferase.